A 164-amino-acid chain; its full sequence is Large ribosomal subunit protein uL10 (164 aa).

Belongs to the universal ribosomal protein uL10 family. Part of the ribosomal stalk of the 50S ribosomal subunit. The N-terminus interacts with L11 and the large rRNA to form the base of the stalk. The C-terminus forms an elongated spine to which L12 dimers bind in a sequential fashion forming a multimeric L10(L12)X complex.

Functionally, forms part of the ribosomal stalk, playing a central role in the interaction of the ribosome with GTP-bound translation factors. This chain is Large ribosomal subunit protein uL10, found in Pseudoalteromonas translucida (strain TAC 125).